The sequence spans 371 residues: DNA replication and repair protein RecF (371 aa).

30-37 (GKNGQGKT) contacts ATP.

It belongs to the RecF family.

The protein localises to the cytoplasm. Its function is as follows. The RecF protein is involved in DNA metabolism; it is required for DNA replication and normal SOS inducibility. RecF binds preferentially to single-stranded, linear DNA. It also seems to bind ATP. This chain is DNA replication and repair protein RecF, found in Clostridioides difficile (strain 630) (Peptoclostridium difficile).